A 100-amino-acid polypeptide reads, in one-letter code: Small ribosomal subunit protein uS14c (100 aa).

The protein belongs to the universal ribosomal protein uS14 family. As to quaternary structure, part of the 30S ribosomal subunit.

The protein resides in the plastid. Its subcellular location is the chloroplast. In terms of biological role, binds 16S rRNA, required for the assembly of 30S particles. The polypeptide is Small ribosomal subunit protein uS14c (Ceratophyllum demersum (Rigid hornwort)).